The primary structure comprises 557 residues: Dihydroxy-acid dehydratase (557 aa).

A [2Fe-2S] cluster-binding site is contributed by Cys47. Asp79 contacts Mg(2+). Cys120 contacts [2Fe-2S] cluster. The Mg(2+) site is built by Asp121 and Lys122. Lys122 is modified (N6-carboxylysine). Cys192 provides a ligand contact to [2Fe-2S] cluster. Mg(2+) is bound at residue Glu444. Catalysis depends on Ser470, which acts as the Proton acceptor.

The protein belongs to the IlvD/Edd family. Homodimer. It depends on [2Fe-2S] cluster as a cofactor. Mg(2+) is required as a cofactor.

It carries out the reaction (2R)-2,3-dihydroxy-3-methylbutanoate = 3-methyl-2-oxobutanoate + H2O. The enzyme catalyses (2R,3R)-2,3-dihydroxy-3-methylpentanoate = (S)-3-methyl-2-oxopentanoate + H2O. It functions in the pathway amino-acid biosynthesis; L-isoleucine biosynthesis; L-isoleucine from 2-oxobutanoate: step 3/4. Its pathway is amino-acid biosynthesis; L-valine biosynthesis; L-valine from pyruvate: step 3/4. Functions in the biosynthesis of branched-chain amino acids. Catalyzes the dehydration of (2R,3R)-2,3-dihydroxy-3-methylpentanoate (2,3-dihydroxy-3-methylvalerate) into 2-oxo-3-methylpentanoate (2-oxo-3-methylvalerate) and of (2R)-2,3-dihydroxy-3-methylbutanoate (2,3-dihydroxyisovalerate) into 2-oxo-3-methylbutanoate (2-oxoisovalerate), the penultimate precursor to L-isoleucine and L-valine, respectively. The sequence is that of Dihydroxy-acid dehydratase from Synechococcus sp. (strain CC9605).